Consider the following 124-residue polypeptide: Large ribosomal subunit protein bL20c (124 aa).

This sequence belongs to the bacterial ribosomal protein bL20 family.

It is found in the plastid. Its subcellular location is the chloroplast. Its function is as follows. Binds directly to 23S ribosomal RNA and is necessary for the in vitro assembly process of the 50S ribosomal subunit. It is not involved in the protein synthesizing functions of that subunit. The protein is Large ribosomal subunit protein bL20c (rpl20) of Euglena gracilis.